A 118-amino-acid polypeptide reads, in one-letter code: Large ribosomal subunit protein bL20 (118 aa).

It belongs to the bacterial ribosomal protein bL20 family.

Binds directly to 23S ribosomal RNA and is necessary for the in vitro assembly process of the 50S ribosomal subunit. It is not involved in the protein synthesizing functions of that subunit. The polypeptide is Large ribosomal subunit protein bL20 (Campylobacter concisus (strain 13826)).